Here is a 619-residue protein sequence, read N- to C-terminus: Guanylate cyclase soluble subunit beta-1 (619 aa).

His-105 lines the heme pocket. The Guanylate cyclase domain maps to 421–554 (TILFSGIVGF…NTVNLTSRTE (134 aa)).

This sequence belongs to the adenylyl cyclase class-4/guanylyl cyclase family. The active enzyme is formed by a heterodimer of an alpha and a beta subunit. Heterodimer with GUCY1A1. Can also form inactive homodimers in vitro. Heme is required as a cofactor. In terms of tissue distribution, lung and brain.

Its subcellular location is the cytoplasm. The enzyme catalyses GTP = 3',5'-cyclic GMP + diphosphate. With respect to regulation, activated by nitric oxide in the presence of magnesium or manganese ions, binding of NO to the heme iron increases catalytic activity up to 400 folds. In terms of biological role, mediates responses to nitric oxide (NO) by catalyzing the biosynthesis of the signaling molecule cGMP. The polypeptide is Guanylate cyclase soluble subunit beta-1 (GUCY1B1) (Bos taurus (Bovine)).